Consider the following 919-residue polypeptide: UPF0182 protein Tery_4385 (919 aa).

A run of 7 helical transmembrane segments spans residues 6-26, 52-72, 96-116, 160-180, 198-218, 243-263, and 268-288; these read YIII…RTLV, IFLW…NYWI, IFVK…AATA, WLFT…ALKG, THIS…FWFE, FAYW…VLSV, and IIWP…FNVL.

The protein belongs to the UPF0182 family.

It localises to the cell membrane. In Trichodesmium erythraeum (strain IMS101), this protein is UPF0182 protein Tery_4385.